Here is a 291-residue protein sequence, read N- to C-terminus: Beta-lactamase CTX-M-1 (291 aa).

The N-terminal stretch at Met-1–Ala-28 is a signal peptide. Residue Ser-73 is the Nucleophile; acyl-ester intermediate of the active site. Positions 76, 133, 169, and 240 each coordinate a beta-lactam. Glu-169 (proton acceptor) is an active-site residue.

Belongs to the class-A beta-lactamase family. As to quaternary structure, monomer.

The protein resides in the secreted. It carries out the reaction a beta-lactam + H2O = a substituted beta-amino acid. Inhibited by the beta-lactamase-blocking agent clavulanic acid; in the TG1 strain. In terms of biological role, extended-spectrum beta-lactamase (ESBL) which confers resistance to penicillins, as well as first, second and third-generation cephalosporins. Has cefotaxime-hydrolyzing activity. Inactive against the cephamycin antibiotic, cefoxitin, or against the carbapenem, imipenem. This chain is Beta-lactamase CTX-M-1, found in Escherichia coli.